Consider the following 293-residue polypeptide: uncharacterized protein (293 aa).

The 58-residue stretch at 1–58 (MELKQLITFITAAEHVNFTLTAKMLNYAQSSVTSQIKSLEEEIGTPLFERLGKRLILT) folds into the HTH lysR-type domain. The H-T-H motif DNA-binding region spans 18–37 (FTLTAKMLNYAQSSVTSQIK).

It belongs to the LysR transcriptional regulatory family.

The protein localises to the cytoplasm. This is an uncharacterized protein from Bacillus subtilis (strain 168).